The sequence spans 265 residues: Undecaprenyl-diphosphatase (265 aa).

The next 8 membrane-spanning stretches (helical) occupy residues 14-34 (GLGE…PWLF), 40-60 (SLVF…VYFW), 79-99 (GKLF…GYLF), 112-132 (LLIA…DSIA), 141-161 (MNVF…FPGI), 182-202 (AKFS…VSLL), 217-237 (IGFF…LGIV), and 242-262 (FKIF…FYLL).

Belongs to the UppP family.

The protein resides in the cell membrane. It catalyses the reaction di-trans,octa-cis-undecaprenyl diphosphate + H2O = di-trans,octa-cis-undecaprenyl phosphate + phosphate + H(+). Catalyzes the dephosphorylation of undecaprenyl diphosphate (UPP). Confers resistance to bacitracin. The polypeptide is Undecaprenyl-diphosphatase (Caldicellulosiruptor bescii (strain ATCC BAA-1888 / DSM 6725 / KCTC 15123 / Z-1320) (Anaerocellum thermophilum)).